The following is a 630-amino-acid chain: Alpha-1,4-glucan:maltose-1-phosphate maltosyltransferase (630 aa).

Alpha-maltose 1-phosphate is bound by residues Arg-234, Gln-294, and Asp-329. Asp-365 serves as the catalytic Nucleophile. Asn-366 lines the alpha-maltose 1-phosphate pocket. The active-site Proton donor is Glu-394. 504–505 serves as a coordination point for alpha-maltose 1-phosphate; sequence KY.

It belongs to the glycosyl hydrolase 13 family. GlgE subfamily. As to quaternary structure, homodimer.

It carries out the reaction alpha-maltose 1-phosphate + [(1-&gt;4)-alpha-D-glucosyl](n) = [(1-&gt;4)-alpha-D-glucosyl](n+2) + phosphate. Maltosyltransferase that uses maltose 1-phosphate (M1P) as the sugar donor to elongate linear or branched alpha-(1-&gt;4)-glucans. Is involved in a branched alpha-glucan biosynthetic pathway from trehalose, together with TreS, Mak and GlgB. This Picrophilus torridus (strain ATCC 700027 / DSM 9790 / JCM 10055 / NBRC 100828 / KAW 2/3) protein is Alpha-1,4-glucan:maltose-1-phosphate maltosyltransferase.